Here is a 217-residue protein sequence, read N- to C-terminus: Protein-L-isoaspartate O-methyltransferase (217 aa).

Residue S67 is part of the active site.

The protein belongs to the methyltransferase superfamily. L-isoaspartyl/D-aspartyl protein methyltransferase family.

The protein localises to the cytoplasm. It catalyses the reaction [protein]-L-isoaspartate + S-adenosyl-L-methionine = [protein]-L-isoaspartate alpha-methyl ester + S-adenosyl-L-homocysteine. Catalyzes the methyl esterification of L-isoaspartyl residues in peptides and proteins that result from spontaneous decomposition of normal L-aspartyl and L-asparaginyl residues. It plays a role in the repair and/or degradation of damaged proteins. The protein is Protein-L-isoaspartate O-methyltransferase of Azoarcus sp. (strain BH72).